The sequence spans 768 residues: cGMP-dependent protein kinase, isozyme 1 (768 aa).

Residues 1–192 form a regulatory region; it reads MAAGMLTDRE…NDFLKNIDAS (192 aa). Over residues 114–127 the composition is skewed to low complexity; it reads PLASTSSASPSGRT. The disordered stretch occupies residues 114–134; it reads PLASTSSASPSGRTSADEVRP. Residues 249-252, 259-260, Arg-366, 375-378, 385-386, and Tyr-421 each bind 3',5'-cyclic GMP; these read GELA, RT, and GEQA. One can recognise a Protein kinase domain in the interval 457–717; it reads LEVVSTLGIG…IQDIKKHKWF (261 aa). ATP contacts are provided by residues 463–471 and Lys-488; that span reads LGIGGFGRV. The active-site Proton acceptor is Asp-582. The AGC-kinase C-terminal domain occupies 718-768; the sequence is LGFDWDGLASQLLIPPFVRPIAHPTDVRYFDRFPCDLNEPPDELSGWDADF.

It belongs to the protein kinase superfamily. AGC Ser/Thr protein kinase family. cGMP subfamily. As to quaternary structure, homodimer. The cofactor is Mg(2+). In terms of processing, autophosphorylated. In terms of tissue distribution, in embryo stage 13, expression is seen in a few large, irregular cells having the appearance of hemocytes or macrophages. In adults, expression is seen in optic lamina and weakly in testis.

It carries out the reaction L-seryl-[protein] + ATP = O-phospho-L-seryl-[protein] + ADP + H(+). The enzyme catalyses L-threonyl-[protein] + ATP = O-phospho-L-threonyl-[protein] + ADP + H(+). With respect to regulation, binding of cGMP results in enzyme activation. The protein is cGMP-dependent protein kinase, isozyme 1 (Pkg21D) of Drosophila melanogaster (Fruit fly).